Reading from the N-terminus, the 88-residue chain is MFTIDIIVKYTPVPFSIQRKSAEDAESTYEQIVESIRSGNPQILELTCEKIPEKKIAVVMSEVSGVQISQKSGAAATGRPPGFVTVAQ.

It belongs to the UPF0367 family.

This Trichodesmium erythraeum (strain IMS101) protein is UPF0367 protein Tery_1229.